The following is a 549-amino-acid chain: Glucose-6-phosphate isomerase (549 aa).

An N6-acetyllysine mark is found at Lys-80, Lys-228, and Lys-234. Glu-355 acts as the Proton donor in catalysis. Catalysis depends on residues His-386 and Lys-514.

It belongs to the GPI family.

The protein localises to the cytoplasm. The catalysed reaction is alpha-D-glucose 6-phosphate = beta-D-fructose 6-phosphate. It functions in the pathway carbohydrate biosynthesis; gluconeogenesis. The protein operates within carbohydrate degradation; glycolysis; D-glyceraldehyde 3-phosphate and glycerone phosphate from D-glucose: step 2/4. In terms of biological role, catalyzes the reversible isomerization of glucose-6-phosphate to fructose-6-phosphate. The polypeptide is Glucose-6-phosphate isomerase (Shigella boydii serotype 4 (strain Sb227)).